A 1233-amino-acid chain; its full sequence is Glutamate receptor ionotropic, NMDA 2C (1233 aa).

Residues 1–19 (MGGALGPALLLTSLFGAWA) form the signal peptide. Residues 20-554 (GLGPGQGEQG…SAFLEPYSPA (535 aa)) are Extracellular-facing. N-linked (GlcNAc...) asparagine glycans are attached at residues asparagine 70 and asparagine 73. An intrachain disulfide couples cysteine 82 to cysteine 317. N-linked (GlcNAc...) asparagine glycosylation is found at asparagine 337 and asparagine 438. 2 disulfides stabilise this stretch: cysteine 426–cysteine 453 and cysteine 433–cysteine 454. Positions 509, 511, and 516 each coordinate L-glutamate. N-linked (GlcNAc...) asparagine glycosylation is present at asparagine 539. A helical transmembrane segment spans residues 555-575 (VWVMMFVMCLTVVAITVFMFE). The Cytoplasmic portion of the chain corresponds to 576–598 (YFSPVSYNQNLTRGKKSGGPAFT). The segment at residues 599–611 (IGKSVWLLWALVF) is an intramembrane region (discontinuously helical). The pore-forming stretch occupies residues 601–620 (KSVWLLWALVFNNSVPIENP). The Cytoplasmic portion of the chain corresponds to 612–626 (NNSVPIENPRGTTSK). A helical transmembrane segment spans residues 627–644 (IMVLVWAFFAVIFLASYT). Over 645-813 (ANLAAFMIQE…EVMSSKLDID (169 aa)) the chain is Extracellular. An N-linked (GlcNAc...) asparagine glycan is attached at asparagine 685. L-glutamate contacts are provided by serine 687, threonine 688, and aspartate 729. Cysteine 743 and cysteine 798 are joined by a disulfide. The helical transmembrane segment at 814–836 (NMAGVFYMLLVAMGLALLVFAWE) threads the bilayer. The Cytoplasmic segment spans residues 837–1233 (HLVYWKLRHS…RRISSLESEV (397 aa)). A phosphoserine mark is found at serine 875, serine 881, and serine 912. A disordered region spans residues 920-994 (IENWGGGRRA…GPPLSDVSRV (75 aa)). Pro residues-rich tracts occupy residues 929-956 (APPP…PEPS) and 975-987 (PQPP…PGPP). The short motif at 1231 to 1233 (SEV) is the PDZ-binding element.

Belongs to the glutamate-gated ion channel (TC 1.A.10.1) family. NR2C/GRIN2C subfamily. Heterotetramer. Forms heterotetrameric channels composed of two GluN1/zeta subunits (GRIN1), and two identical GluN2/epsilon subunits (GRIN2A, GRIN2B, GRIN2C or GRIN2D) or GluN3 subunits (GRIN3A or GRIN3B) (in vitro). In vivo, the subunit composition may depend on the expression levels of the different subunits. Interacts with PDZ domains of PATJ and DLG4. Interacts (via PDZ-binding motif) with SNX27 (via PDZ domain); the interaction is required for recycling to the plasma membrane when endocytosed and prevent degradation in lysosomes. As to expression, mainly expressed in brain with predominant expression is in the cerebellum, also present in the hippocampus, amygdala, caudate nucleus, corpus callosum, subthalamic nuclei and thalamus. Detected in the heart, skeletal muscle and pancreas.

It is found in the cell membrane. The protein resides in the postsynaptic cell membrane. The catalysed reaction is Ca(2+)(in) = Ca(2+)(out). The enzyme catalyses Na(+)(in) = Na(+)(out). It carries out the reaction K(+)(in) = K(+)(out). Functionally, component of N-methyl-D-aspartate (NMDA) receptors (NMDARs) that function as heterotetrameric, ligand-gated cation channels with high calcium permeability and voltage-dependent block by Mg(2+). Participates in synaptic plasticity for learning and memory formation by contributing to the slow phase of excitatory postsynaptic current and long-term synaptic potentiation. Channel activation requires binding of the neurotransmitter L-glutamate to the GluN2 subunit, glycine or D-serine binding to the GluN1 subunit, plus membrane depolarization to eliminate channel inhibition by Mg(2+). NMDARs mediate simultaneously the potasium efflux and the influx of calcium and sodium. Each GluN2 subunit confers differential attributes to channel properties, including activation, deactivation and desensitization kinetics, pH sensitivity, Ca2(+) permeability, and binding to allosteric modulators. This Homo sapiens (Human) protein is Glutamate receptor ionotropic, NMDA 2C.